The following is a 113-amino-acid chain: Large ribosomal subunit protein bL17 (113 aa).

The protein belongs to the bacterial ribosomal protein bL17 family. Part of the 50S ribosomal subunit. Contacts protein L32.

This is Large ribosomal subunit protein bL17 from Clostridium botulinum (strain Alaska E43 / Type E3).